The following is a 433-amino-acid chain: ACT domain-containing protein ACR6 (433 aa).

ACT domains lie at 30-110 (VIQV…RSSV), 120-207 (SIEL…SCSD), 250-326 (VVTM…ASEG), and 328-402 (ELEL…VKKK).

In terms of biological role, may bind amino acids. The protein is ACT domain-containing protein ACR6 of Arabidopsis thaliana (Mouse-ear cress).